We begin with the raw amino-acid sequence, 340 residues long: MTEASLNEAADAAIKAFDGAQNLDELAALRRDHLGDAAPIPQARRSLGTIPKDQRKDAGRFVNMALGRAEKHFAQVKVVLEEKRNAEVLELERVDVTVPTTREQVGALHPITILNEQIADIFVGMGWEIAEGPEVEAEYFNFDALNFLPDHPARTLQDTFHIAPEGSRQVLRTHTSPVQVRTMLNREVPIYIACPGRVFRTDELDATHTPVFHQIEGLAVDKGLTMAHLRGTLDHLAKELFGPETKTRMRSNYFPFTEPSAEVDVWFPNKKGGAGWIEWGGCGMVNPNVLRAVGVDPEEYTGFAFGMGIERTLQFRNGLSDMRDMVEGDIRFTLPFGIQA.

Glutamate 258 lines the Mg(2+) pocket.

Belongs to the class-II aminoacyl-tRNA synthetase family. Phe-tRNA synthetase alpha subunit type 1 subfamily. Tetramer of two alpha and two beta subunits. Mg(2+) is required as a cofactor.

The protein localises to the cytoplasm. It carries out the reaction tRNA(Phe) + L-phenylalanine + ATP = L-phenylalanyl-tRNA(Phe) + AMP + diphosphate + H(+). The chain is Phenylalanine--tRNA ligase alpha subunit from Corynebacterium glutamicum (strain ATCC 13032 / DSM 20300 / JCM 1318 / BCRC 11384 / CCUG 27702 / LMG 3730 / NBRC 12168 / NCIMB 10025 / NRRL B-2784 / 534).